The sequence spans 220 residues: Large ribosomal subunit protein uL1 (220 aa).

The protein belongs to the universal ribosomal protein uL1 family. As to quaternary structure, part of the 50S ribosomal subunit.

Binds directly to 23S rRNA. The L1 stalk is quite mobile in the ribosome, and is involved in E site tRNA release. In terms of biological role, protein L1 is also a translational repressor protein, it controls the translation of the L11 operon by binding to its mRNA. The protein is Large ribosomal subunit protein uL1 of Ehrlichia chaffeensis (strain ATCC CRL-10679 / Arkansas).